Consider the following 395-residue polypeptide: Putative nickel insertion protein (395 aa).

Belongs to the LarC family.

The chain is Putative nickel insertion protein from Methanopyrus kandleri (strain AV19 / DSM 6324 / JCM 9639 / NBRC 100938).